We begin with the raw amino-acid sequence, 267 residues long: tRNA pseudouridine synthase A (267 aa).

The Nucleophile role is filled by Asp-55. Tyr-111 serves as a coordination point for substrate.

The protein belongs to the tRNA pseudouridine synthase TruA family.

It carries out the reaction uridine(38/39/40) in tRNA = pseudouridine(38/39/40) in tRNA. Formation of pseudouridine at positions 38, 39 and 40 in the anticodon stem and loop of transfer RNAs. In Thermococcus kodakarensis (strain ATCC BAA-918 / JCM 12380 / KOD1) (Pyrococcus kodakaraensis (strain KOD1)), this protein is tRNA pseudouridine synthase A.